The sequence spans 167 residues: Ubiquitin-fold modifier-conjugating enzyme 1 (167 aa).

Cysteine 116 serves as the catalytic Glycyl thioester intermediate.

It belongs to the ubiquitin-conjugating enzyme family. UFC1 subfamily. In terms of assembly, interacts with UBA5 (via C-terminus). Interacts with UFL1. Interacts with UFM1.

Its function is as follows. E2-like enzyme which specifically catalyzes the second step in ufmylation. Accepts the ubiquitin-like modifier UFM1 from the E1 enzyme UBA5 and forms an intermediate with UFM1 via a thioester linkage. Ufmylation is involved in various processes, such as ribosome recycling, response to DNA damage, interferon response or reticulophagy (also called ER-phagy). This chain is Ubiquitin-fold modifier-conjugating enzyme 1, found in Esox lucius (Northern pike).